The sequence spans 165 residues: MAGTALKRLMAEYKQLTLNPPEGIVAGPMNEENFFEWEALIMGPEDTCFEFGVFPAILSFPLDYPLSPPKMRFTCEMFHPNIYPDGRVCISILHAPGDDPMGYESSAERWSPVQSVEKILLSVVSMLAEPNDESGANVDASKMWRDDREQFYKVAKQIVQKSLGL.

Residue alanine 2 is modified to N-acetylalanine. Positions 4–164 constitute a UBC core domain; it reads TALKRLMAEY…AKQIVQKSLG (161 aa). Catalysis depends on cysteine 89, which acts as the Glycyl thioester intermediate.

Belongs to the ubiquitin-conjugating enzyme family. As to quaternary structure, interacts with AUP1 (via C-terminus); the interaction recruits UBE2G2 to lipid droplets. Interacts with ubiquitin ligases AMFR/gp78 and RNF139/TRC8; recruitment to lipid droplets by AUP1 facilitates interaction of UBE2G2 with AMFR and RNF139, leading to sterol-induced ubiquitination of 3-hydroxy-3-methylglutaryl coenzyme A reductase and its subsequent proteasomal degradation.

It localises to the endoplasmic reticulum. Its subcellular location is the lipid droplet. The catalysed reaction is S-ubiquitinyl-[E1 ubiquitin-activating enzyme]-L-cysteine + [E2 ubiquitin-conjugating enzyme]-L-cysteine = [E1 ubiquitin-activating enzyme]-L-cysteine + S-ubiquitinyl-[E2 ubiquitin-conjugating enzyme]-L-cysteine.. It functions in the pathway protein modification; protein ubiquitination. Accepts ubiquitin from the E1 complex and catalyzes its covalent attachment to other proteins. In vitro catalyzes 'Lys-48'-linked polyubiquitination. Involved in endoplasmic reticulum-associated degradation (ERAD). Required for sterol-induced ubiquitination of 3-hydroxy-3-methylglutaryl coenzyme A reductase and its subsequent proteasomal degradation. In Bos taurus (Bovine), this protein is Ubiquitin-conjugating enzyme E2 G2.